We begin with the raw amino-acid sequence, 173 residues long: MEKVIAKTYAKAILERNDFENFYSNLLELSSAFASNKFIDILNSYEIKQDKKLELILSLLDNPSDAFKNFINLIVDNKREMLIPEITKELSEQKASKENTFLGQVYSKEKLSEEEIKNLEEKLSLKFNAKIRLDSKISDNDSVKISLDGLGYEISFSMQSLKAKMNEYILKAI.

Belongs to the ATPase delta chain family. As to quaternary structure, F-type ATPases have 2 components, F(1) - the catalytic core - and F(0) - the membrane proton channel. F(1) has five subunits: alpha(3), beta(3), gamma(1), delta(1), epsilon(1). F(0) has three main subunits: a(1), b(2) and c(10-14). The alpha and beta chains form an alternating ring which encloses part of the gamma chain. F(1) is attached to F(0) by a central stalk formed by the gamma and epsilon chains, while a peripheral stalk is formed by the delta and b chains.

It localises to the cell inner membrane. In terms of biological role, f(1)F(0) ATP synthase produces ATP from ADP in the presence of a proton or sodium gradient. F-type ATPases consist of two structural domains, F(1) containing the extramembraneous catalytic core and F(0) containing the membrane proton channel, linked together by a central stalk and a peripheral stalk. During catalysis, ATP synthesis in the catalytic domain of F(1) is coupled via a rotary mechanism of the central stalk subunits to proton translocation. Functionally, this protein is part of the stalk that links CF(0) to CF(1). It either transmits conformational changes from CF(0) to CF(1) or is implicated in proton conduction. The sequence is that of ATP synthase subunit delta from Campylobacter lari (strain RM2100 / D67 / ATCC BAA-1060).